Reading from the N-terminus, the 263-residue chain is TPR repeat-containing protein DDB_G0285095 (263 aa).

Positions 1-25 (MGCCGSKEKYNGEDVPKSQRLENRP) are enriched in basic and acidic residues. The interval 1–62 (MGCCGSKEKY…ASASQQNNPT (62 aa)) is disordered. 3 TPR repeats span residues 87–120 (SDLLAQYGVLLSMEGKNKEAEESLRKAVEVDTDN), 121–154 (SRAWQAYGEFLERTNNPKKAKEVYGEAYKHAAPK), and 162–195 (SSLLLSYAIFIQKSGEIDKAEKLYKRIVTSGARS).

This is TPR repeat-containing protein DDB_G0285095 from Dictyostelium discoideum (Social amoeba).